Consider the following 141-residue polypeptide: Large ribosomal subunit protein uL16 (141 aa).

Belongs to the universal ribosomal protein uL16 family. In terms of assembly, part of the 50S ribosomal subunit.

Binds 23S rRNA and is also seen to make contacts with the A and possibly P site tRNAs. This is Large ribosomal subunit protein uL16 from Sulfurimonas denitrificans (strain ATCC 33889 / DSM 1251) (Thiomicrospira denitrificans (strain ATCC 33889 / DSM 1251)).